Reading from the N-terminus, the 170-residue chain is M-agglutinin (170 aa).

A signal peptide spans 1–24; it reads MNLKKIAIASSVFAGITMALTCHA.

Functionally, this protein is a non-fimbrial hemagglutinin that is specific for blood group M. This is M-agglutinin (bmaE) from Escherichia coli.